We begin with the raw amino-acid sequence, 526 residues long: Probable Xaa-Pro aminopeptidase MGG_05684 (526 aa).

Residues D285, D296, E447, and E488 each coordinate Mn(2+).

The protein belongs to the peptidase M24B family. Requires Mn(2+) as cofactor.

It carries out the reaction Release of any N-terminal amino acid, including proline, that is linked to proline, even from a dipeptide or tripeptide.. In terms of biological role, catalyzes the removal of a penultimate prolyl residue from the N-termini of peptides. This is Probable Xaa-Pro aminopeptidase MGG_05684 from Pyricularia oryzae (strain 70-15 / ATCC MYA-4617 / FGSC 8958) (Rice blast fungus).